The following is a 796-amino-acid chain: Potassium transporter 10 (796 aa).

The segment at 1–30 (MAGRVESSIGGGEIDEEGDERGSMWDLDQS) is disordered. Over 1-58 (MAGRVESSIGGGEIDEEGDERGSMWDLDQSLDQPMDEEAGRLRNMYREKKFSAFLLLQ) the chain is Cytoplasmic. A helical transmembrane segment spans residues 59 to 79 (LSFQSLGVVYGDLGTSPLYVF). The Extracellular segment spans residues 80–95 (YNTFPRGIKDPEDIIG). Residues 96 to 116 (ALSLIIYSLTLIPLLKYVFVV) traverse the membrane as a helical segment. Over 117–184 (CKANDNGQGG…ENGTSRKNAL (68 aa)) the chain is Cytoplasmic. The helical transmembrane segment at 185–205 (LILVLVGTCMVIGDGILTPAI) threads the bilayer. Over 206–217 (SVLSAAGGLRVN) the chain is Extracellular. The helical transmembrane segment at 218–238 (LPHINNGIVVVVAVVILVSLF) threads the bilayer. Over 239-248 (SVQHYGTDRV) the chain is Cytoplasmic. The helical transmembrane segment at 249–269 (GWLFAPIVFLWFLFIASIGMF) threads the bilayer. Topologically, residues 270–298 (NIWKHDPSVLKAFSPVYIFRYFKRGGQDR) are extracellular. The helical transmembrane segment at 299 to 319 (WTSLGGIMLSITGIEALFADL) threads the bilayer. At 320-321 (SH) the chain is on the cytoplasmic side. The helical transmembrane segment at 322 to 342 (FPVSAVQFAFTVIVFPCLLLA) threads the bilayer. Residues 343 to 368 (YSGQAAYLRKYPHHVEDAFYQSIPKR) lie on the Extracellular side of the membrane. Residues 369-389 (VYWPMFIIATAAAIVASQATI) form a helical membrane-spanning segment. Topologically, residues 390–420 (SATFSLIKQALAHGCFPRVKVVHTSRKFLGQ) are cytoplasmic. A helical membrane pass occupies residues 421–441 (IYVPDINWILMILCIAVTAGF). Residues 442–453 (KNQNQIGNAYGT) lie on the Extracellular side of the membrane. Residues 454–474 (AVVIVMLVTTLLMMLIMILVW) form a helical membrane-spanning segment. The Cytoplasmic portion of the chain corresponds to 475–480 (RCHWVL). Residues 481–501 (VLLFTLLSLVVECTYFSAVLF) form a helical membrane-spanning segment. The Extracellular segment spans residues 502–505 (KVNQ). The helical transmembrane segment at 506–526 (GGWVPLVIAAAFLVIMYVWHY) threads the bilayer. Residues 527–796 (GTLKRYEFEM…LLNVGQIFYV (270 aa)) are Cytoplasmic-facing.

The protein belongs to the HAK/KUP transporter (TC 2.A.72.3) family.

Its subcellular location is the cell membrane. In terms of biological role, putative potassium transporter. The chain is Potassium transporter 10 (POT10) from Arabidopsis thaliana (Mouse-ear cress).